Reading from the N-terminus, the 116-residue chain is Ribosome-binding factor A (116 aa).

This sequence belongs to the RbfA family. In terms of assembly, monomer. Binds 30S ribosomal subunits, but not 50S ribosomal subunits or 70S ribosomes.

It localises to the cytoplasm. One of several proteins that assist in the late maturation steps of the functional core of the 30S ribosomal subunit. Associates with free 30S ribosomal subunits (but not with 30S subunits that are part of 70S ribosomes or polysomes). Required for efficient processing of 16S rRNA. May interact with the 5'-terminal helix region of 16S rRNA. This chain is Ribosome-binding factor A, found in Streptococcus pyogenes serotype M5 (strain Manfredo).